Consider the following 131-residue polypeptide: DNA-directed RNA polymerases I, II, and III subunit RPABC2 (131 aa).

The disordered stretch occupies residues 1 to 24 (MDDADYDNDDVGGDDFDDVDEDVD).

This sequence belongs to the archaeal Rpo6/eukaryotic RPB6 RNA polymerase subunit family. Component of the RNA polymerase I (Pol I), RNA polymerase II (Pol II) and RNA polymerase III (Pol III) complexes consisting of at least 13, 12 and 17 subunits, respectively.

The protein localises to the nucleus. DNA-dependent RNA polymerases catalyze the transcription of DNA into RNA using the four ribonucleoside triphosphates as substrates. Common component of RNA polymerases I, II and III which synthesize ribosomal RNA precursors, mRNA precursors and many functional non-coding RNAs, and small RNAs, such as 5S rRNA and tRNAs, respectively. Pol II is the central component of the basal RNA polymerase II transcription machinery. Pols are composed of mobile elements that move relative to each other. In Pol II, Polr2F/RPB6 is part of the clamp element and together with parts of Polr2A/RPB1 and RPB2 forms a pocket to which the Polr2D/RPB4-Polr2G/RPB7 subcomplex binds. This is DNA-directed RNA polymerases I, II, and III subunit RPABC2 from Drosophila melanogaster (Fruit fly).